Here is a 403-residue protein sequence, read N- to C-terminus: Phosphopentomutase (403 aa).

Residues aspartate 13, aspartate 298, histidine 303, aspartate 339, histidine 340, and histidine 351 each contribute to the Mn(2+) site.

This sequence belongs to the phosphopentomutase family. Requires Mn(2+) as cofactor.

The protein resides in the cytoplasm. The catalysed reaction is 2-deoxy-alpha-D-ribose 1-phosphate = 2-deoxy-D-ribose 5-phosphate. It carries out the reaction alpha-D-ribose 1-phosphate = D-ribose 5-phosphate. It participates in carbohydrate degradation; 2-deoxy-D-ribose 1-phosphate degradation; D-glyceraldehyde 3-phosphate and acetaldehyde from 2-deoxy-alpha-D-ribose 1-phosphate: step 1/2. Functionally, isomerase that catalyzes the conversion of deoxy-ribose 1-phosphate (dRib-1-P) and ribose 1-phosphate (Rib-1-P) to deoxy-ribose 5-phosphate (dRib-5-P) and ribose 5-phosphate (Rib-5-P), respectively. This is Phosphopentomutase from Streptococcus pyogenes serotype M28 (strain MGAS6180).